Here is a 111-residue protein sequence, read N- to C-terminus: BET1-like protein (111 aa).

At 1–86 (MADWARAQSP…MARSGRDNRK (86 aa)) the chain is on the cytoplasmic side. Residues serine 9 and serine 37 each carry the phosphoserine modification. Residues 15–77 (EILDRENKRM…TGSVKRFSTM (63 aa)) form the t-SNARE coiled-coil homology domain. A helical; Anchor for type IV membrane protein membrane pass occupies residues 87 to 107 (LLCGMAVGLIVAFFILSYFLS). At 108–111 (RART) the chain is on the lumenal side.

As to quaternary structure, component of a SNARE complex consisting of STX5, YKT6, GOSR1 and BET1L. Interacts with STX5.

The protein resides in the golgi apparatus membrane. It is found in the golgi apparatus. It localises to the trans-Golgi network membrane. Vesicle SNARE required for targeting and fusion of retrograde transport vesicles with the Golgi complex. Required for the integrity of the Golgi complex. The sequence is that of BET1-like protein from Pongo abelii (Sumatran orangutan).